Here is a 346-residue protein sequence, read N- to C-terminus: Phospholipase A1 (346 aa).

Positions 1 to 26 (MRKFAAIFVVFFVQCTHLYSLAQARA) are cleaved as a signal peptide. Positions 27-37 (EPDPGVVEYLK) are excised as a propeptide. Asparagine 44 and asparagine 72 each carry an N-linked (GlcNAc...) asparagine glycan. The active-site Nucleophile is the serine 167. N-linked (GlcNAc...) asparagine glycosylation is present at asparagine 185. Residues aspartate 195 and histidine 258 each act as charge relay system in the active site.

It belongs to the AB hydrolase superfamily. Lipase family. Contains six disulfide bonds. Post-translationally, N-glycosylated; contains mannose. Expressed by the venom gland.

The protein localises to the secreted. It carries out the reaction a 1,2-diacyl-sn-glycero-3-phosphocholine + H2O = a 2-acyl-sn-glycero-3-phosphocholine + a fatty acid + H(+). Catalyzes the hydrolysis of phosphatidylcholine with phospholipase A1 activity. Induces hemolytic activity. Acts as an allergen. This is Phospholipase A1 from Solenopsis invicta (Red imported fire ant).